A 364-amino-acid chain; its full sequence is Salivary endonuclease (364 aa).

The N-terminal stretch at methionine 1–serine 24 is a signal peptide. Asparagine 285 carries an N-linked (GlcNAc...) asparagine glycan.

This sequence belongs to the DNA/RNA non-specific endonuclease family. Mg(2+) serves as cofactor. In terms of tissue distribution, saliva (at protein level). Female salivary gland.

It is found in the secreted. Its function is as follows. Hydrolyzes double-stranded DNA with no sequence specificity. Does not cleave ssDNA and RNA. May facilitate blood meal intake by lowering the local viscosity created by the release of host DNA. The polypeptide is Salivary endonuclease (Culex quinquefasciatus (Southern house mosquito)).